Reading from the N-terminus, the 158-residue chain is NAD(P)H-quinone oxidoreductase subunit J, chloroplastic (158 aa).

Belongs to the complex I 30 kDa subunit family. NDH is composed of at least 16 different subunits, 5 of which are encoded in the nucleus.

The protein localises to the plastid. The protein resides in the chloroplast thylakoid membrane. It carries out the reaction a plastoquinone + NADH + (n+1) H(+)(in) = a plastoquinol + NAD(+) + n H(+)(out). The catalysed reaction is a plastoquinone + NADPH + (n+1) H(+)(in) = a plastoquinol + NADP(+) + n H(+)(out). Its function is as follows. NDH shuttles electrons from NAD(P)H:plastoquinone, via FMN and iron-sulfur (Fe-S) centers, to quinones in the photosynthetic chain and possibly in a chloroplast respiratory chain. The immediate electron acceptor for the enzyme in this species is believed to be plastoquinone. Couples the redox reaction to proton translocation, and thus conserves the redox energy in a proton gradient. The polypeptide is NAD(P)H-quinone oxidoreductase subunit J, chloroplastic (Helianthus annuus (Common sunflower)).